The sequence spans 73 residues: Large ribosomal subunit protein uL29 (73 aa).

This sequence belongs to the universal ribosomal protein uL29 family.

The protein is Large ribosomal subunit protein uL29 of Synechococcus sp. (strain JA-2-3B'a(2-13)) (Cyanobacteria bacterium Yellowstone B-Prime).